The sequence spans 349 residues: Palmitoyltransferase PFA5 (349 aa).

The next 2 membrane-spanning stretches (helical) occupy residues 19–39 (LIPF…CHQF) and 57–77 (LIIV…LMLV). A DHHC domain is found at 126–176 (IWCSNCQSLKMSRTHHSTKVGYCVPRFDHYCVWIGTVLGRLNYKLFVQFTF). C156 (S-palmitoyl cysteine intermediate) is an active-site residue. A run of 2 helical transmembrane segments spans residues 170–190 (LFVQ…ISIA) and 204–224 (VYAV…LFLT).

Belongs to the DHHC palmitoyltransferase family. PFA5 subfamily.

The protein resides in the membrane. The catalysed reaction is L-cysteinyl-[protein] + hexadecanoyl-CoA = S-hexadecanoyl-L-cysteinyl-[protein] + CoA. This is Palmitoyltransferase PFA5 (PFA5) from Kluyveromyces lactis (strain ATCC 8585 / CBS 2359 / DSM 70799 / NBRC 1267 / NRRL Y-1140 / WM37) (Yeast).